The primary structure comprises 560 residues: Serine/threonine-protein kinase TOS3 (560 aa).

A Protein kinase domain is found at 50–344 (FEILATLGNG…LADIKVHPFM (295 aa)). Residues 56 to 64 (LGNGQYGKV) and Lys-79 each bind ATP. Asp-189 functions as the Proton acceptor in the catalytic mechanism.

Belongs to the protein kinase superfamily. Ser/Thr protein kinase family. Autophosphorylated.

It carries out the reaction L-seryl-[protein] + ATP = O-phospho-L-seryl-[protein] + ADP + H(+). The catalysed reaction is L-threonyl-[protein] + ATP = O-phospho-L-threonyl-[protein] + ADP + H(+). Its function is as follows. One of the three SNF1 protein kinases (with SAK1 and ELM1) which are required for growth on nonfermentable carbon sources and nonpreferred sugars and for response to environmental stress. Activates SNF1 by phosphorylation of its activation-loop 'Thr-210'. Required for the regulation by SNF1 of the transcription of a large set of genes, the modification the activity of metabolic enzymes, and the control of various nutrient-responsive cellular developmental processes. Also phosphorylates GAL83, MIG1 and SIP2. The protein is Serine/threonine-protein kinase TOS3 (TOS3) of Saccharomyces cerevisiae (strain YJM789) (Baker's yeast).